Reading from the N-terminus, the 350-residue chain is Putative deoxyribonuclease-2 (350 aa).

The protein belongs to the DNase II family.

This chain is Putative deoxyribonuclease-2, found in Burkholderia thailandensis (strain ATCC 700388 / DSM 13276 / CCUG 48851 / CIP 106301 / E264).